The primary structure comprises 1193 residues: Cysteine protease ATG4 (1193 aa).

2 disordered regions span residues 23–284 and 358–474; these read AAIA…NKMS and WRPI…KKKS. Residues 35–49 show a composition bias toward pro residues; the sequence is NLPPPPPPDRIPPPK. The segment covering 50–59 has biased composition (basic residues); it reads GRSHQQKFKI. Basic and acidic residues-rich tracts occupy residues 60–72, 117–127, and 140–153; these read LRKE…RQPI, ANREEKKEKTS, and FGRD…KPEE. Over residues 170 to 185 the composition is skewed to low complexity; sequence SSSTSTDSTTSRSITS. Polar residues predominate over residues 186–205; the sequence is AFTRQNSIQSRRSPRTSFGQ. Positions 227–238 are enriched in low complexity; the sequence is SSTTSHDPSSDP. Polar residues-rich tracts occupy residues 253–262, 270–284, and 389–447; these read QGASMSSLSR, GGTS…NKMS, and LSMN…STLS. Catalysis depends on C570, which acts as the Nucleophile. Active-site residues include D789 and H791. Disordered regions lie at residues 807–869, 899–924, and 1000–1171; these read HSAK…SKYK, VPKS…TSTA, and QDEM…PARN. Residues 835–846 are compositionally biased toward low complexity; the sequence is RTPETPRSTTPS. 2 stretches are compositionally biased toward acidic residues: residues 1004 to 1029 and 1070 to 1084; these read PSWE…EFEE and HLDV…DDNE. Composition is skewed to basic and acidic residues over residues 1097–1112 and 1152–1164; these read IARH…KREQ and PRYE…EQER.

This sequence belongs to the peptidase C54 family.

The protein resides in the cytoplasm. The protein localises to the nucleus. Its subcellular location is the preautophagosomal structure. The catalysed reaction is [protein]-C-terminal L-amino acid-glycyl-phosphatidylethanolamide + H2O = [protein]-C-terminal L-amino acid-glycine + a 1,2-diacyl-sn-glycero-3-phosphoethanolamine. Cysteine protease that plays a key role in cytoplasm to vacuole transport (Cvt) and autophagy by mediating both proteolytic activation and delipidation of ATG8. Required for selective autophagic degradation of the nucleus (nucleophagy) as well as for mitophagy which contributes to regulate mitochondrial quantity and quality by eliminating the mitochondria to a basal level to fulfill cellular energy requirements and preventing excess ROS production. The protease activity is required for proteolytic activation of ATG8: cleaves the C-terminal amino acid of ATG8 to reveal a C-terminal glycine. ATG8 ubiquitin-like activity requires the exposure of the glycine at the C-terminus for its conjugation to phosphatidylethanolamine (PE) and its insertion to membranes, which is necessary for autophagy. The ATG8-PE conjugate mediates tethering between adjacent membranes and stimulates membrane hemifusion, leading to expansion of the autophagosomal membrane during autophagy. In addition to the protease activity, also catalyzes deconjugation of PE-conjugated forms of ATG8 during macroautophagy: ATG8 delipidation is required to release the protein from membranes, which facilitates multiple events during macroautophagy, and especially for efficient autophagosome biogenesis, the assembly of ATG9-containing tubulovesicular clusters into phagophores/autophagosomes, and for the disassembly of PAS-associated ATG components. ATG8 delipidation by ATG4 also recycles ATG8-PE generated on inappropriate membranes to maintain a reservoir of unlipidated ATG8 that is required for autophagosome formation at the PAS. The protein is Cysteine protease ATG4 (ATG4) of Cryptococcus neoformans var. neoformans serotype D (strain JEC21 / ATCC MYA-565) (Filobasidiella neoformans).